A 154-amino-acid chain; its full sequence is Small ribosomal subunit protein bS16 (154 aa).

Positions V82 to A154 are disordered. Positions K92–A109 are enriched in basic and acidic residues. Residues K110–P129 are compositionally biased toward low complexity. The span at P142 to A154 shows a compositional bias: acidic residues.

This sequence belongs to the bacterial ribosomal protein bS16 family.

In Rhizorhabdus wittichii (strain DSM 6014 / CCUG 31198 / JCM 15750 / NBRC 105917 / EY 4224 / RW1) (Sphingomonas wittichii), this protein is Small ribosomal subunit protein bS16.